The following is a 338-amino-acid chain: Heat-inducible transcription repressor HrcA (338 aa).

This sequence belongs to the HrcA family.

In terms of biological role, negative regulator of class I heat shock genes (grpE-dnaK-dnaJ and groELS operons). Prevents heat-shock induction of these operons. This Bacillus cereus (strain 03BB102) protein is Heat-inducible transcription repressor HrcA.